Consider the following 347-residue polypeptide: Phenylalanine--tRNA ligase alpha subunit (347 aa).

Residue Glu-262 participates in Mg(2+) binding.

The protein belongs to the class-II aminoacyl-tRNA synthetase family. Phe-tRNA synthetase alpha subunit type 1 subfamily. As to quaternary structure, tetramer of two alpha and two beta subunits. It depends on Mg(2+) as a cofactor.

The protein resides in the cytoplasm. It carries out the reaction tRNA(Phe) + L-phenylalanine + ATP = L-phenylalanyl-tRNA(Phe) + AMP + diphosphate + H(+). This is Phenylalanine--tRNA ligase alpha subunit from Roseiflexus sp. (strain RS-1).